The following is a 320-amino-acid chain: Mitochondrial thiamine pyrophosphate carrier (320 aa).

3 Solcar repeats span residues 13–106 (NTKF…LTEL), 116–202 (REFS…LKHL), and 214–309 (NENL…FCNV). Residues 19–39 (AVAGSVSGLVTRALISPFDVI) traverse the membrane as a helical segment. S51 is modified (phosphoserine). 4 helical membrane-spanning segments follow: residues 87-107 (ILSI…TELV), 122-142 (FVCG…VDVL), 173-193 (VFYK…GLQF), and 220-240 (LLCG…LDLF). A Substrate recognition motif is present at residues 241–246 (KKRLQV). Residues 293 to 313 (ALSTGFMFFWYEFFCNVFHCM) traverse the membrane as a helical segment.

Belongs to the mitochondrial carrier (TC 2.A.29) family.

It localises to the mitochondrion membrane. It catalyses the reaction thiamine phosphate(out) + thiamine diphosphate(in) = thiamine phosphate(in) + thiamine diphosphate(out). Functionally, mitochondrial transporter mediating uptake of thiamine diphosphate into mitochondria. It is not clear if the antiporter activity is affected by the membrane potential or by the proton electrochemical gradient. The sequence is that of Mitochondrial thiamine pyrophosphate carrier (SLC25A19) from Pongo abelii (Sumatran orangutan).